A 132-amino-acid chain; its full sequence is Small ribosomal subunit protein uS8 (132 aa).

The protein belongs to the universal ribosomal protein uS8 family. As to quaternary structure, part of the 30S ribosomal subunit. Contacts proteins S5 and S12.

One of the primary rRNA binding proteins, it binds directly to 16S rRNA central domain where it helps coordinate assembly of the platform of the 30S subunit. This chain is Small ribosomal subunit protein uS8, found in Ehrlichia canis (strain Jake).